The following is a 262-amino-acid chain: Fibroin light chain (262 aa).

The N-terminal stretch at 1-16 is a signal peptide; sequence MKPIFLVLLVATSAYA. Ser-19 is modified (N-acetylserine; in short form). A disulfide bond links Cys-101 and Cys-160.

In terms of assembly, silk fibroin elementary unit consists in a disulfide-linked heavy and light chain and a p25 glycoprotein in molar ratios of 6:6:1. This results in a complex of approximately 2.3 MDa. The interchain disulfide bridge is essential for the intracellular transport and secretion of fibroin. Post-translationally, partially N-terminally processed to yield a short form which lacks the first two residues of the long form. In terms of tissue distribution, produced exclusively in the posterior (PSG) section of silk glands, which are essentially modified salivary glands.

It is found in the secreted. Functionally, it is likely that the major role of L-chain is to prevent the retention of H-chain in ER by forming the disulfide linkage. This chain is Fibroin light chain (FIBL), found in Bombyx mori (Silk moth).